A 323-amino-acid chain; its full sequence is Acetyl-coenzyme A carboxylase carboxyl transferase subunit alpha (323 aa).

The 255-residue stretch at 39-293 (RLSKKSQQLT…RRALGDSLRQ (255 aa)) folds into the CoA carboxyltransferase C-terminal domain.

Belongs to the AccA family. In terms of assembly, acetyl-CoA carboxylase is a heterohexamer composed of biotin carboxyl carrier protein (AccB), biotin carboxylase (AccC) and two subunits each of ACCase subunit alpha (AccA) and ACCase subunit beta (AccD).

It localises to the cytoplasm. It carries out the reaction N(6)-carboxybiotinyl-L-lysyl-[protein] + acetyl-CoA = N(6)-biotinyl-L-lysyl-[protein] + malonyl-CoA. It participates in lipid metabolism; malonyl-CoA biosynthesis; malonyl-CoA from acetyl-CoA: step 1/1. Its function is as follows. Component of the acetyl coenzyme A carboxylase (ACC) complex. First, biotin carboxylase catalyzes the carboxylation of biotin on its carrier protein (BCCP) and then the CO(2) group is transferred by the carboxyltransferase to acetyl-CoA to form malonyl-CoA. The polypeptide is Acetyl-coenzyme A carboxylase carboxyl transferase subunit alpha (Burkholderia pseudomallei (strain 1106a)).